The chain runs to 84 residues: RNA-binding protein Hfq (84 aa).

The Sm domain maps to 10-70 (DLFLNVLRRD…ISTIMPFRPV (61 aa)).

It belongs to the Hfq family. In terms of assembly, homohexamer.

In terms of biological role, RNA chaperone that binds small regulatory RNA (sRNAs) and mRNAs to facilitate mRNA translational regulation in response to envelope stress, environmental stress and changes in metabolite concentrations. Also binds with high specificity to tRNAs. This Moorella thermoacetica (strain ATCC 39073 / JCM 9320) protein is RNA-binding protein Hfq.